A 298-amino-acid polypeptide reads, in one-letter code: tRNA dimethylallyltransferase 2 (298 aa).

Position 19–26 (19–26) interacts with ATP; sequence GATATGKT. 21–26 provides a ligand contact to substrate; it reads TATGKT. The segment at 44–47 is interaction with substrate tRNA; sequence DSRQ.

Belongs to the IPP transferase family. As to quaternary structure, monomer. Mg(2+) is required as a cofactor.

It carries out the reaction adenosine(37) in tRNA + dimethylallyl diphosphate = N(6)-dimethylallyladenosine(37) in tRNA + diphosphate. Catalyzes the transfer of a dimethylallyl group onto the adenine at position 37 in tRNAs that read codons beginning with uridine, leading to the formation of N6-(dimethylallyl)adenosine (i(6)A). This Treponema denticola (strain ATCC 35405 / DSM 14222 / CIP 103919 / JCM 8153 / KCTC 15104) protein is tRNA dimethylallyltransferase 2.